The chain runs to 353 residues: MASSWPPLELQSSNQSQLFPQNATACDNAPEAWDLLHRVLPTFIISICFFGLLGNLFVLLVFLLPRRQLNVAEIYLANLAASDLVFVLGLPFWAENIWNQFNWPFGALLCRVINGVIKANLFISIFLVVAISQDRYRVLVHPMASRRQQRRRQARVTCVLIWVVGGLLSIPTFLLRSIQAVPDLNITACILLLPHEAWHFARIVELNILGFLLPLAAIVFFNYHILASLRTREEVSRTRCGGRKDSKTTALILTLVVAFLVCWAPYHFFAFLEFLFQVQAVRGCFWEDFIDLGLQLANFFAFTNSSLNPVIYVFVGRLFRTKVWELYKQCTPKSLAPISSSHRKEIFQLFWRN.

The Extracellular portion of the chain corresponds to 1–40; it reads MASSWPPLELQSSNQSQLFPQNATACDNAPEAWDLLHRVL. 2 N-linked (GlcNAc...) asparagine glycosylation sites follow: N14 and N22. A helical transmembrane segment spans residues 41–64; the sequence is PTFIISICFFGLLGNLFVLLVFLL. Over 65–73 the chain is Cytoplasmic; it reads PRRQLNVAE. The chain crosses the membrane as a helical span at residues 74–98; that stretch reads IYLANLAASDLVFVLGLPFWAENIW. At 99–111 the chain is on the extracellular side; it reads NQFNWPFGALLCR. A disulfide bond links C110 and C189. The helical transmembrane segment at 112–133 threads the bilayer; the sequence is VINGVIKANLFISIFLVVAISQ. The Cytoplasmic segment spans residues 134–155; it reads DRYRVLVHPMASRRQQRRRQAR. A helical membrane pass occupies residues 156–178; it reads VTCVLIWVVGGLLSIPTFLLRSI. Over 179 to 199 the chain is Extracellular; sequence QAVPDLNITACILLLPHEAWH. N-linked (GlcNAc...) asparagine glycosylation is present at N185. A helical membrane pass occupies residues 200-226; the sequence is FARIVELNILGFLLPLAAIVFFNYHIL. Over 227–247 the chain is Cytoplasmic; sequence ASLRTREEVSRTRCGGRKDSK. The helical transmembrane segment at 248–272 threads the bilayer; it reads TTALILTLVVAFLVCWAPYHFFAFL. The Extracellular segment spans residues 273–291; the sequence is EFLFQVQAVRGCFWEDFID. Residues 292 to 314 form a helical membrane-spanning segment; the sequence is LGLQLANFFAFTNSSLNPVIYVF. Topologically, residues 315–353 are cytoplasmic; that stretch reads VGRLFRTKVWELYKQCTPKSLAPISSSHRKEIFQLFWRN. C330 is lipidated: S-palmitoyl cysteine.

Belongs to the G-protein coupled receptor 1 family. Bradykinin receptor subfamily. BDKRB1 sub-subfamily.

The protein resides in the cell membrane. Functionally, this is a receptor for bradykinin. Could be a factor in chronic pain and inflammation. This chain is B1 bradykinin receptor (BDKRB1), found in Homo sapiens (Human).